A 587-amino-acid polypeptide reads, in one-letter code: Arginine--tRNA ligase (587 aa).

The 'HIGH' region motif lies at 127-137 (PNLAKEMHVGH).

It belongs to the class-I aminoacyl-tRNA synthetase family. Monomer.

The protein resides in the cytoplasm. The enzyme catalyses tRNA(Arg) + L-arginine + ATP = L-arginyl-tRNA(Arg) + AMP + diphosphate. This is Arginine--tRNA ligase from Pseudomonas aeruginosa (strain LESB58).